The following is a 424-amino-acid chain: MIKLGVIADDFTGATDIASFLVNNGLPTVQLNGVPPSDFKVDTQAVVISLKSRSCSAEQAVADSLNALAWLQQQGCQQFYFKYCSTFDSTAKGNIGPVTDALLEQLGETQTIISPALPVNGRTVYQGHLFVMDQLLSESGMRHHPVTPMTDSNLMRVMEQQAAGQCGLVPYAVMDQGADAVKQRLAQLKEQGMRYVVLDTLNEQHLLTQGEALRDMKLVTGGSGLAIGLARQWADSTKQTSSATEAGKPQSGAGVVLSGSCSVMTNKQVAHYLKQAAGRAIDVARCLESDDAQQSYAQELADWVKAHRDDALAPLLYATSSPDELAQIQQRWGAEASSHAVEKLFAAVARQLQEDGFQRFIIAGGETSSIVVQTLGIHAFHIGPSISPGVPWVRSTTHPLSLALKSGNFGDEDFFARAQKEFAA.

ATP is bound by residues Ser260, 364 to 367 (GGET), and Gly407.

The protein belongs to the four-carbon acid sugar kinase family.

The enzyme catalyses 3-dehydro-L-erythronate + ATP = 3-dehydro-4-O-phospho-L-erythronate + ADP + H(+). It carries out the reaction 3-dehydro-D-erythronate + ATP = 3-dehydro-4-O-phospho-D-erythronate + ADP + H(+). In terms of biological role, catalyzes the ATP-dependent phosphorylation of 3-oxo-tetronate to 3-oxo-tetronate 4-phosphate. The sequence is that of 3-oxo-tetronate kinase from Pectobacterium atrosepticum (strain SCRI 1043 / ATCC BAA-672) (Erwinia carotovora subsp. atroseptica).